The sequence spans 892 residues: Protein argonaute 11 (892 aa).

A compositionally biased stretch (gly residues) spans 1–17 (MSSRGGGVGGRRGGPGG). Disordered regions lie at residues 1–68 (MSSR…ALQP) and 86–117 (MEAR…GALP). The segment covering 86–107 (MEAREGASSSSSASAPAVGEVE) has biased composition (low complexity). A PAZ domain is found at 248–362 (SLKQFLAGTY…LPMEVCRIVK (115 aa)). One can recognise a Piwi domain in the interval 541 to 848 (LLVIVLPDAN…AASRARHYLE (308 aa)). Residues 850 to 876 (GSLPDHGSSSASAAGGSRRNDRGVPVK) form a disordered region. A compositionally biased stretch (low complexity) spans 856 to 866 (GSSSASAAGGS). The segment covering 867–876 (RRNDRGVPVK) has biased composition (basic and acidic residues).

Belongs to the argonaute family. Ago subfamily.

Functionally, probably involved in the RNA silencing pathway. May bind to short RNAs such as microRNAs (miRNAs) or short interfering RNAs (siRNAs), and represses the translation of mRNAs which are complementary to them. The polypeptide is Protein argonaute 11 (AGO11) (Oryza sativa subsp. japonica (Rice)).